The chain runs to 366 residues: Phospho-N-acetylmuramoyl-pentapeptide-transferase (366 aa).

Helical transmembrane passes span 3-23 (QIII…PILI), 55-75 (IAII…SYFA), 80-100 (FTAS…TGFA), 118-138 (AKLI…LRFP), 161-181 (IAFG…YVVV), 197-217 (LAAG…FWQF), 238-258 (IAVL…WNAA), 262-282 (IFMG…ISVV), 290-310 (VIIG…IAVF), and 341-361 (FWLI…GDWL).

It belongs to the glycosyltransferase 4 family. MraY subfamily. It depends on Mg(2+) as a cofactor.

It localises to the cell membrane. It catalyses the reaction UDP-N-acetyl-alpha-D-muramoyl-L-alanyl-gamma-D-glutamyl-meso-2,6-diaminopimeloyl-D-alanyl-D-alanine + di-trans,octa-cis-undecaprenyl phosphate = di-trans,octa-cis-undecaprenyl diphospho-N-acetyl-alpha-D-muramoyl-L-alanyl-D-glutamyl-meso-2,6-diaminopimeloyl-D-alanyl-D-alanine + UMP. It participates in cell wall biogenesis; peptidoglycan biosynthesis. Catalyzes the initial step of the lipid cycle reactions in the biosynthesis of the cell wall peptidoglycan: transfers peptidoglycan precursor phospho-MurNAc-pentapeptide from UDP-MurNAc-pentapeptide onto the lipid carrier undecaprenyl phosphate, yielding undecaprenyl-pyrophosphoryl-MurNAc-pentapeptide, known as lipid I. The sequence is that of Phospho-N-acetylmuramoyl-pentapeptide-transferase from Corynebacterium efficiens (strain DSM 44549 / YS-314 / AJ 12310 / JCM 11189 / NBRC 100395).